We begin with the raw amino-acid sequence, 158 residues long: Transcription elongation factor GreA (158 aa).

Residues 47-74 (AEYHAAKEEQSHNEGRINELEDKLARAD) are a coiled coil.

This sequence belongs to the GreA/GreB family.

Necessary for efficient RNA polymerase transcription elongation past template-encoded arresting sites. The arresting sites in DNA have the property of trapping a certain fraction of elongating RNA polymerases that pass through, resulting in locked ternary complexes. Cleavage of the nascent transcript by cleavage factors such as GreA or GreB allows the resumption of elongation from the new 3'terminus. GreA releases sequences of 2 to 3 nucleotides. In Rhodopseudomonas palustris (strain ATCC BAA-98 / CGA009), this protein is Transcription elongation factor GreA.